The following is a 254-amino-acid chain: N(G),N(G)-dimethylarginine dimethylaminohydrolase (254 aa).

Substrate is bound by residues Leu18, Asp60, 65–66, Arg85, and Arg132; that span reads ED. His162 serves as the catalytic Proton donor. His162 provides a ligand contact to Zn(2+). Ile243 lines the substrate pocket. Cys249 is a Zn(2+) binding site. Catalysis depends on Cys249, which acts as the Nucleophile.

Belongs to the DDAH family. As to quaternary structure, homodimer.

It carries out the reaction N(omega),N(omega)-dimethyl-L-arginine + H2O = dimethylamine + L-citrulline. It catalyses the reaction N(omega)-methyl-L-arginine + H2O = L-citrulline + methylamine. Its activity is regulated as follows. Inhibited by zinc ions. Competitively inhibited by lysine. Functionally, hydrolyzes N(G),N(G)-dimethyl-L-arginine (ADMA) and N(G)-monomethyl-L-arginine (MMA). This chain is N(G),N(G)-dimethylarginine dimethylaminohydrolase, found in Pseudomonas aeruginosa (strain ATCC 15692 / DSM 22644 / CIP 104116 / JCM 14847 / LMG 12228 / 1C / PRS 101 / PAO1).